The sequence spans 324 residues: Inhibitor of growth protein 1 homolog (324 aa).

The interval 120-237 (AEEEKKKKKS…SSRKQKSMAA (118 aa)) is disordered. Residues 140-169 (SSTTSSSSSSSSSSLSLSSSTNNTSSLNSS) are compositionally biased toward low complexity. Residues 170–186 (SGGGGGGSGGGGGGGGH) show a composition bias toward gly residues. A compositionally biased stretch (low complexity) spans 201 to 229 (SLTSSSSSGNINGMSSSSSSSSSSSSLSS). The PHD-type zinc finger occupies 271-320 (PTYCFCNRVSFGEMVGCENPDCKIEWFHFECVGLTSTPKGKWYCPDCTRI). Positions 274, 276, 287, 292, 298, 301, 314, and 317 each coordinate Zn(2+).

This sequence belongs to the ING family. Interacts with H3K4me3 and to a lesser extent with H3K4me2.

Its subcellular location is the nucleus. Its function is as follows. Involved in regulation of the growth and differentiation transition (GDT) process, probably by regulating gene expression via histone modification. This is Inhibitor of growth protein 1 homolog from Dictyostelium discoideum (Social amoeba).